Reading from the N-terminus, the 268-residue chain is Ribosomal RNA small subunit methyltransferase A (268 aa).

Residues N16, L18, G43, E64, D89, and N110 each contribute to the S-adenosyl-L-methionine site.

The protein belongs to the class I-like SAM-binding methyltransferase superfamily. rRNA adenine N(6)-methyltransferase family. RsmA subfamily.

It localises to the cytoplasm. It carries out the reaction adenosine(1518)/adenosine(1519) in 16S rRNA + 4 S-adenosyl-L-methionine = N(6)-dimethyladenosine(1518)/N(6)-dimethyladenosine(1519) in 16S rRNA + 4 S-adenosyl-L-homocysteine + 4 H(+). Its function is as follows. Specifically dimethylates two adjacent adenosines (A1518 and A1519) in the loop of a conserved hairpin near the 3'-end of 16S rRNA in the 30S particle. May play a critical role in biogenesis of 30S subunits. This is Ribosomal RNA small subunit methyltransferase A from Pseudomonas syringae pv. syringae (strain B728a).